Here is a 159-residue protein sequence, read N- to C-terminus: 6,7-dimethyl-8-ribityllumazine synthase (159 aa).

5-amino-6-(D-ribitylamino)uracil-binding positions include tryptophan 26, 57–59, and 79–81; these read ALE and CVV. 84-85 is a binding site for (2S)-2-hydroxy-3-oxobutyl phosphate; the sequence is GT. The active-site Proton donor is histidine 87. 5-amino-6-(D-ribitylamino)uracil is bound at residue asparagine 112. Arginine 126 contacts (2S)-2-hydroxy-3-oxobutyl phosphate.

The protein belongs to the DMRL synthase family.

The enzyme catalyses (2S)-2-hydroxy-3-oxobutyl phosphate + 5-amino-6-(D-ribitylamino)uracil = 6,7-dimethyl-8-(1-D-ribityl)lumazine + phosphate + 2 H2O + H(+). The protein operates within cofactor biosynthesis; riboflavin biosynthesis; riboflavin from 2-hydroxy-3-oxobutyl phosphate and 5-amino-6-(D-ribitylamino)uracil: step 1/2. Functionally, catalyzes the formation of 6,7-dimethyl-8-ribityllumazine by condensation of 5-amino-6-(D-ribitylamino)uracil with 3,4-dihydroxy-2-butanone 4-phosphate. This is the penultimate step in the biosynthesis of riboflavin. This Corynebacterium glutamicum (strain ATCC 13032 / DSM 20300 / JCM 1318 / BCRC 11384 / CCUG 27702 / LMG 3730 / NBRC 12168 / NCIMB 10025 / NRRL B-2784 / 534) protein is 6,7-dimethyl-8-ribityllumazine synthase.